The following is a 441-amino-acid chain: Chromosomal replication initiator protein DnaA (441 aa).

Residues 1 to 71 (MDIRWEEILE…AVYQVVGDRF (71 aa)) form a domain I, interacts with DnaA modulators region. The interval 71 to 99 (FKVSILTESETSSHVLKEVIQSKFDDSDS) is domain II. Residues 100–318 (DLNPEYIFSN…GIVNDLVMYK (219 aa)) are domain III, AAA+ region. Gly-143, Gly-145, Lys-146, and Thr-147 together coordinate ATP. Residues 319–441 (KAYEYFLLTE…HTIKHKISFQ (123 aa)) form a domain IV, binds dsDNA region.

Belongs to the DnaA family. Oligomerizes as a right-handed, spiral filament on DNA at oriC.

It localises to the cytoplasm. In terms of biological role, plays an essential role in the initiation and regulation of chromosomal replication. ATP-DnaA binds to the origin of replication (oriC) to initiate formation of the DNA replication initiation complex once per cell cycle. Binds the DnaA box (a 9 base pair repeat at the origin) and separates the double-stranded (ds)DNA. Forms a right-handed helical filament on oriC DNA; dsDNA binds to the exterior of the filament while single-stranded (ss)DNA is stabiized in the filament's interior. The ATP-DnaA-oriC complex binds and stabilizes one strand of the AT-rich DNA unwinding element (DUE), permitting loading of DNA polymerase. After initiation quickly degrades to an ADP-DnaA complex that is not apt for DNA replication. Binds acidic phospholipids. This chain is Chromosomal replication initiator protein DnaA, found in Leptospira biflexa serovar Patoc (strain Patoc 1 / Ames).